The primary structure comprises 177 residues: Large ribosomal subunit protein uL6 (177 aa).

The protein belongs to the universal ribosomal protein uL6 family. In terms of assembly, part of the 50S ribosomal subunit.

In terms of biological role, this protein binds to the 23S rRNA, and is important in its secondary structure. It is located near the subunit interface in the base of the L7/L12 stalk, and near the tRNA binding site of the peptidyltransferase center. The protein is Large ribosomal subunit protein uL6 of Sinorhizobium fredii (strain NBRC 101917 / NGR234).